Here is a 777-residue protein sequence, read N- to C-terminus: MELGRAGPAGLLLLLLLLLAAQAAPERDPYRVLGVGRSSSQADIKKAYKRLARQWHPDKNKDPGAEDKFIQISKAYEILSNEEKRANFDRYGDAGESQGYSQHQQRQFHHFHEGFYFDESFFHFPFNSERRDTSDEKYLLHFSHYINEIVPDSFKKPYLIKITSDWCFSCIHIEPVWKEVAQELEALGVGIGVVHAGYERRLAHHLGAHSTPSILGLINGKITFFHSAVVRENLRQFVENLLPGNLVEKITDKNYIRFLSNWKKENKPHVLLFDHMPVVPLLYKLTAFAYRDYLSFGYVYVGLRGTEELSSQYNINVYTPTLMIFKEHIDKPADVAQARDMKKQLIDDFLSQNKFLMAARLTNQRLFQELCPVKKSHRQRKHCVVLLTGEGDKFADAYEAFLTFAVANTKDTLRFAHIYNDRQPEFADALLMDEEKYRGKSAVVILERRNNAGKIAYKTLEEAWQGSNEDNFILLDLLDQLRTDPGLLSSETVLADLNDELAPMFLIRWFYSTLDYILDCWDSLFHSNWREMMPLLSLLFSALFILFGTVIVQAFSDSSDTRDSPASEKKDTTAKTEKNDTSFNKESNSRVPKKGFVEVTELTDINYNSNLVRLRPGHMNVVLILSNSTKTALLQKFALEVYTFTGSSSLHFSFLSLDKHREWLEYLLEFAQDAAPIPNQYDKHFLERDYTGYVLALNGHKKYFCLFKPHRSGDEGGTLGACEDYDSSLHTEARGKSSCSPGSRSLKNKLHKLSFWMERLLEGSLQRFYIPSWPALD.

The N-terminal stretch at 1 to 23 (MELGRAGPAGLLLLLLLLLAAQA) is a signal peptide. The Cytoplasmic portion of the chain corresponds to 24 to 531 (APERDPYRVL…DSLFHSNWRE (508 aa)). Positions 28-92 (DPYRVLGVGR…EKRANFDRYG (65 aa)) constitute a J domain. The region spanning 117 to 243 (FDESFFHFPF…LRQFVENLLP (127 aa)) is the Thioredoxin domain. A helical; Anchor for type IV membrane protein transmembrane segment spans residues 532–552 (MMPLLSLLFSALFILFGTVIV). Topologically, residues 553–777 (QAFSDSSDTR…FYIPSWPALD (225 aa)) are extracellular. Residues 558-589 (SSDTRDSPASEKKDTTAKTEKNDTSFNKESNS) form a disordered region. Residues 559–580 (SDTRDSPASEKKDTTAKTEKND) show a composition bias toward basic and acidic residues. N627 is a glycosylation site (N-linked (GlcNAc...) asparagine).

It is found in the endoplasmic reticulum membrane. In terms of biological role, plays an important role in regulating the size of autophagosomes during the formation process. The polypeptide is DnaJ homolog subfamily C member 16 (DNAJC16) (Gallus gallus (Chicken)).